The sequence spans 212 residues: Pyridoxine/pyridoxamine 5'-phosphate oxidase (212 aa).

FMN contacts are provided by residues 59–64, 74–75, Lys81, and Gln103; these read RMVLMK and YS. Substrate is bound at residue Lys64. Substrate-binding residues include Tyr121 and Arg125. Residues 138 to 139 and Trp183 each bind FMN; that span reads QS. Position 189 to 191 (189 to 191) interacts with substrate; the sequence is RLH. Arg193 is a binding site for FMN.

The protein belongs to the pyridoxamine 5'-phosphate oxidase family. As to quaternary structure, homodimer. The cofactor is FMN.

It carries out the reaction pyridoxamine 5'-phosphate + O2 + H2O = pyridoxal 5'-phosphate + H2O2 + NH4(+). The enzyme catalyses pyridoxine 5'-phosphate + O2 = pyridoxal 5'-phosphate + H2O2. It participates in cofactor metabolism; pyridoxal 5'-phosphate salvage; pyridoxal 5'-phosphate from pyridoxamine 5'-phosphate: step 1/1. The protein operates within cofactor metabolism; pyridoxal 5'-phosphate salvage; pyridoxal 5'-phosphate from pyridoxine 5'-phosphate: step 1/1. Functionally, catalyzes the oxidation of either pyridoxine 5'-phosphate (PNP) or pyridoxamine 5'-phosphate (PMP) into pyridoxal 5'-phosphate (PLP). In Rhodopseudomonas palustris (strain BisB5), this protein is Pyridoxine/pyridoxamine 5'-phosphate oxidase.